Here is a 294-residue protein sequence, read N- to C-terminus: Shikimate dehydrogenase (NADP(+)) (294 aa).

Shikimate contacts are provided by residues 22-24 and Ser-69; that span reads SLS. Lys-73 acts as the Proton acceptor in catalysis. Shikimate is bound by residues Asn-94 and Asp-111. Residues 135 to 139 and Leu-236 each bind NADP(+); that span reads GAGGA. A shikimate-binding site is contributed by Tyr-238. Residue Gly-260 participates in NADP(+) binding.

Belongs to the shikimate dehydrogenase family. In terms of assembly, homodimer.

The catalysed reaction is shikimate + NADP(+) = 3-dehydroshikimate + NADPH + H(+). Its pathway is metabolic intermediate biosynthesis; chorismate biosynthesis; chorismate from D-erythrose 4-phosphate and phosphoenolpyruvate: step 4/7. Its function is as follows. Involved in the biosynthesis of the chorismate, which leads to the biosynthesis of aromatic amino acids. Catalyzes the reversible NADPH linked reduction of 3-dehydroshikimate (DHSA) to yield shikimate (SA). The sequence is that of Shikimate dehydrogenase (NADP(+)) from Streptococcus equi subsp. zooepidemicus (strain MGCS10565).